The primary structure comprises 851 residues: Glycogen phosphorylase, liver form (851 aa).

Residue A2 is modified to N-acetylalanine. S15 carries the phosphoserine; by PHK; in form phosphorylase a modification. Residues 43–45 (DRN), Y76, and R310 each bind AMP. K364 carries the N6-succinyllysine modification. K470 carries the post-translational modification N6-acetyllysine. A phosphoserine mark is found at S524, S561, and S639. K681 is subject to N6-(pyridoxal phosphate)lysine. An N6-acetyllysine modification is found at K796.

Belongs to the glycogen phosphorylase family. As to quaternary structure, homodimer; enzymatically active. Interacts with PPP1R3B; recruits the phosphatase PP1 which dephosphorylates and inactivates PYGL/glycogen phosphorylase. Pyridoxal 5'-phosphate is required as a cofactor. Acetylation, which is up-regulated by glucose and insulin and down-regulated by glucagon, inhibits the glycogen phosphorylase activity by promoting PPP1R3B-mediated recruitment of phosphatase PP1 and Ser-15 dephosphorylation. In terms of processing, phosphorylation at Ser-15 converts inactive phosphorylase b into active phosphorylase a. Dephosphorylation of Ser-15 by phosphatase PP1 inactivates the enzyme.

Its subcellular location is the cytoplasm. The protein localises to the cytosol. The catalysed reaction is [(1-&gt;4)-alpha-D-glucosyl](n) + phosphate = [(1-&gt;4)-alpha-D-glucosyl](n-1) + alpha-D-glucose 1-phosphate. With respect to regulation, allosterically regulated through the non-covalent binding of metabolites, being activated by AMP and inhibited by ATP, ADP, and glucose-6-phosphate. The activity is also controlled by post-translational modifications including phosphorylation and acetylation. In terms of biological role, allosteric enzyme that catalyzes the rate-limiting step in glycogen catabolism, the phosphorolytic cleavage of glycogen to produce glucose-1-phosphate, and plays a central role in maintaining cellular and organismal glucose homeostasis. This chain is Glycogen phosphorylase, liver form, found in Ovis aries (Sheep).